Consider the following 188-residue polypeptide: Ribosomal RNA small subunit methyltransferase G (188 aa).

Residues Gly69, Phe74, 119 to 120 (VQ), and Arg134 each bind S-adenosyl-L-methionine.

It belongs to the methyltransferase superfamily. RNA methyltransferase RsmG family.

The protein resides in the cytoplasm. It catalyses the reaction guanosine(527) in 16S rRNA + S-adenosyl-L-methionine = N(7)-methylguanosine(527) in 16S rRNA + S-adenosyl-L-homocysteine. In terms of biological role, specifically methylates the N7 position of guanine in position 527 of 16S rRNA. This Campylobacter jejuni subsp. doylei (strain ATCC BAA-1458 / RM4099 / 269.97) protein is Ribosomal RNA small subunit methyltransferase G.